We begin with the raw amino-acid sequence, 299 residues long: Oxygen-dependent coproporphyrinogen-III oxidase (299 aa).

S92 lines the substrate pocket. A divalent metal cation is bound by residues H96 and H106. The active-site Proton donor is H106. 108–110 (NVR) contributes to the substrate binding site. A divalent metal cation-binding residues include H145 and H175. The important for dimerization stretch occupies residues 240-275 (YVEFNLVWDRGTLFGLQTGGRTESILMSMPPLVRWE). A substrate-binding site is contributed by 258-260 (GGR).

The protein belongs to the aerobic coproporphyrinogen-III oxidase family. As to quaternary structure, homodimer. A divalent metal cation serves as cofactor.

The protein localises to the cytoplasm. The catalysed reaction is coproporphyrinogen III + O2 + 2 H(+) = protoporphyrinogen IX + 2 CO2 + 2 H2O. It functions in the pathway porphyrin-containing compound metabolism; protoporphyrin-IX biosynthesis; protoporphyrinogen-IX from coproporphyrinogen-III (O2 route): step 1/1. In terms of biological role, involved in the heme biosynthesis. Catalyzes the aerobic oxidative decarboxylation of propionate groups of rings A and B of coproporphyrinogen-III to yield the vinyl groups in protoporphyrinogen-IX. This is Oxygen-dependent coproporphyrinogen-III oxidase from Salmonella arizonae (strain ATCC BAA-731 / CDC346-86 / RSK2980).